The primary structure comprises 207 residues: Uridine kinase (207 aa).

13 to 20 contacts ATP; it reads GASGSGKT.

This sequence belongs to the uridine kinase family.

The protein resides in the cytoplasm. The catalysed reaction is uridine + ATP = UMP + ADP + H(+). It catalyses the reaction cytidine + ATP = CMP + ADP + H(+). The protein operates within pyrimidine metabolism; CTP biosynthesis via salvage pathway; CTP from cytidine: step 1/3. It participates in pyrimidine metabolism; UMP biosynthesis via salvage pathway; UMP from uridine: step 1/1. The chain is Uridine kinase from Ureaplasma urealyticum serovar 10 (strain ATCC 33699 / Western).